Consider the following 207-residue polypeptide: Ribosomal RNA small subunit methyltransferase G (207 aa).

S-adenosyl-L-methionine-binding positions include glycine 74, leucine 79, 125-126 (VE), and arginine 140.

The protein belongs to the methyltransferase superfamily. RNA methyltransferase RsmG family.

The protein localises to the cytoplasm. It carries out the reaction guanosine(527) in 16S rRNA + S-adenosyl-L-methionine = N(7)-methylguanosine(527) in 16S rRNA + S-adenosyl-L-homocysteine. Specifically methylates the N7 position of guanine in position 527 of 16S rRNA. This chain is Ribosomal RNA small subunit methyltransferase G, found in Shewanella pealeana (strain ATCC 700345 / ANG-SQ1).